A 571-amino-acid chain; its full sequence is Putative pyruvate decarboxylase C13A11.06 (571 aa).

Residues D29 and H118 each contribute to the pyruvate site. Residues T395 and 418–420 (GSI) each bind thiamine diphosphate. A Mg(2+)-binding site is contributed by D450. Residues 451–452 (GS) and 477–482 (NDGYTI) each bind thiamine diphosphate. Mg(2+)-binding residues include N477 and G479. A pyruvate-binding site is contributed by E483.

The protein belongs to the TPP enzyme family. As to quaternary structure, homotetramer. Requires Mg(2+) as cofactor. The cofactor is thiamine diphosphate.

It carries out the reaction a 2-oxocarboxylate + H(+) = an aldehyde + CO2. The catalysed reaction is pyruvate + H(+) = acetaldehyde + CO2. This Schizosaccharomyces pombe (strain 972 / ATCC 24843) (Fission yeast) protein is Putative pyruvate decarboxylase C13A11.06.